The sequence spans 954 residues: Valine--tRNA ligase (954 aa).

A 'HIGH' region motif is present at residues 48–58; sequence PNVTGSLHMGH. Residues 560 to 564 carry the 'KMSKS' region motif; that stretch reads KMSKS. ATP is bound at residue Lys563. Positions 883-953 form a coiled coil; sequence AGFINKEAEL…IQEQYKAIEA (71 aa).

Belongs to the class-I aminoacyl-tRNA synthetase family. ValS type 1 subfamily. Monomer.

The protein localises to the cytoplasm. It carries out the reaction tRNA(Val) + L-valine + ATP = L-valyl-tRNA(Val) + AMP + diphosphate. Catalyzes the attachment of valine to tRNA(Val). As ValRS can inadvertently accommodate and process structurally similar amino acids such as threonine, to avoid such errors, it has a 'posttransfer' editing activity that hydrolyzes mischarged Thr-tRNA(Val) in a tRNA-dependent manner. The chain is Valine--tRNA ligase from Haemophilus influenzae (strain PittEE).